Consider the following 412-residue polypeptide: Double C2-like domain-containing protein beta (412 aa).

The tract at residues 1–36 is negatively regulates targeting to plasma membrane; it reads MTLRRRGEKATISIQEHMAIDVCPGPIRPIKQISDY. The segment at 1–90 is mediates interaction with DYNLT1; sequence MTLRRRGEKA…EDVDQLFGAY (90 aa). Residues 38–123 form a disordered region; it reads PRFPRGLPPD…PDADGYESDD (86 aa). The span at 49 to 70 shows a compositional bias: low complexity; the sequence is GPRAAAPPDAPARPAVAGAGRR. Residues 95–108 are compositionally biased toward pro residues; sequence GPSPGPSPARPPAK. The span at 112-123 shows a compositional bias: acidic residues; the sequence is DEPDADGYESDD. 2 consecutive C2 domains span residues 126–250 and 266–399; these read ALGT…SICL and ERGR…ERWH. Ca(2+) is bound by residues aspartate 157, aspartate 163, aspartate 218, aspartate 220, aspartate 297, aspartate 303, aspartate 357, aspartate 359, and aspartate 365. The mediates interaction with STXBP3 stretch occupies residues 257–375; the sequence is DKTEDKSLEE…FIGGVVLGIH (119 aa). Serine 411 carries the post-translational modification Phosphoserine.

Interacts with the SNARE (soluble N-ethylmaleimide-sensitive factor attached protein receptor) complex composed of SNAP25, STX1A and VAMP2; the interaction is calcium-dependent and competitive with SYT1. Interacts with STX4; the interaction is calcium-dependent, increased by insulin and glucose, and mediates vesicle fusion with plasma membrane in pancreatic cells and adipocytes. Interacts with STXBP3; the interaction is direct, occurs at the cell membrane and regulates glucose-stimulated insulin secretion. May interact with UNC13A; the interaction mediates targeting to the plasma membrane. Interacts with cytoplasmic dynein light chain DYNLT1. The cofactor is Ca(2+). Widely expressed with highest levels in brain and kidney. Expressed in pancreatic islet cells (at protein level).

It localises to the cytoplasm. It is found in the cytoplasmic granule. Its subcellular location is the cell membrane. In terms of biological role, calcium sensor which positively regulates SNARE-dependent fusion of vesicles with membranes. Binds phospholipids in a calcium-dependent manner and may act at the priming stage of fusion by modifying membrane curvature to stimulate fusion. Involved in calcium-triggered exocytosis in chromaffin cells and calcium-dependent spontaneous release of neurotransmitter in absence of action potentials in neuronal cells. Involved both in glucose-stimulated insulin secretion in pancreatic cells and insulin-dependent GLUT4 transport to the plasma membrane in adipocytes. The polypeptide is Double C2-like domain-containing protein beta (Homo sapiens (Human)).